The following is a 175-amino-acid chain: Major oleosin NAP-II (175 aa).

A polar region spans residues 1–47 (RRDQYPRDRDQYSMIGRDRDKYSMIGRDRDQYNMYGRDYSKSRQIAK). 2 consecutive repeats follow at residues 17-26 (RDRDKYSMIG) and 27-36 (RDRDQYNMYG). Positions 48–119 (AVTAVTAGGS…AAITVFSWIY (72 aa)) are hydrophobic. Transmembrane regions (helical) follow at residues 56–76 (GSLLVLSSLTLVGTVIALTVA), 78–98 (PLLVIFSPILVPALITVALLI), and 99–119 (TGFLSSGGFGIAAITVFSWIY). The interval 151-175 (AQYYGQQQTGGEDDRDRTRGTQHTT) is disordered.

It belongs to the oleosin family.

It localises to the lipid droplet. The protein localises to the membrane. May have a structural role to stabilize the lipid body during desiccation of the seed by preventing coalescence of the oil. Probably interacts with both lipid and phospholipid moieties of lipid bodies. May also provide recognition signals for specific lipase anchorage in lipolysis during seedling growth. This is Major oleosin NAP-II from Brassica napus (Rape).